A 930-amino-acid polypeptide reads, in one-letter code: Isoleucine--tRNA ligase (930 aa).

The short motif at 57 to 67 (PYANGNIHVGH) is the 'HIGH' region element. Glu-554 provides a ligand contact to L-isoleucyl-5'-AMP. The 'KMSKS' region motif lies at 595–599 (KMSKS). Lys-598 contributes to the ATP binding site.

This sequence belongs to the class-I aminoacyl-tRNA synthetase family. IleS type 1 subfamily. Monomer.

Its subcellular location is the cytoplasm. It carries out the reaction tRNA(Ile) + L-isoleucine + ATP = L-isoleucyl-tRNA(Ile) + AMP + diphosphate. Catalyzes the attachment of isoleucine to tRNA(Ile). As IleRS can inadvertently accommodate and process structurally similar amino acids such as valine, to avoid such errors it has two additional distinct tRNA(Ile)-dependent editing activities. One activity is designated as 'pretransfer' editing and involves the hydrolysis of activated Val-AMP. The other activity is designated 'posttransfer' editing and involves deacylation of mischarged Val-tRNA(Ile). In Streptococcus agalactiae serotype III (strain NEM316), this protein is Isoleucine--tRNA ligase.